The following is a 213-amino-acid chain: Kynurenine formamidase (213 aa).

W18 provides a ligand contact to substrate. Positions 48, 52, and 54 each coordinate Zn(2+). H58 functions as the Proton donor/acceptor in the catalytic mechanism. Residues H160 and E172 each coordinate Zn(2+).

This sequence belongs to the Cyclase 1 superfamily. KynB family. Homodimer. Zn(2+) is required as a cofactor.

It catalyses the reaction N-formyl-L-kynurenine + H2O = L-kynurenine + formate + H(+). It participates in amino-acid degradation; L-tryptophan degradation via kynurenine pathway; L-kynurenine from L-tryptophan: step 2/2. In terms of biological role, catalyzes the hydrolysis of N-formyl-L-kynurenine to L-kynurenine, the second step in the kynurenine pathway of tryptophan degradation. This chain is Kynurenine formamidase, found in Burkholderia lata (strain ATCC 17760 / DSM 23089 / LMG 22485 / NCIMB 9086 / R18194 / 383).